The primary structure comprises 493 residues: V-type proton ATPase subunit B (493 aa).

Belongs to the ATPase alpha/beta chains family. As to quaternary structure, V-ATPase is a heteromultimeric enzyme composed of a peripheral catalytic V1 complex (main components: subunits A, B, C, D, E, and F) attached to an integral membrane V0 proton pore complex (main component: the proteolipid protein).

The protein localises to the cytoplasmic vesicle membrane. Its subcellular location is the endosome membrane. It localises to the contractile vacuole membrane. In terms of biological role, vacuolar ATPase is responsible for acidifying a variety of intracellular compartments in eukaryotic cells. The B subunit is non-catalytic but combines with other subunits to form the catalytic complex. V-ATPase is responsible for energizing electrophoretic K(+)/2H(+) antiport by generating a transmembrane voltage of more than 200 mV. The sequence is that of V-type proton ATPase subunit B (vatB) from Dictyostelium discoideum (Social amoeba).